Consider the following 283-residue polypeptide: Thymidylate synthase (283 aa).

Arg22 is a dUMP binding site. Cys160 functions as the Nucleophile in the catalytic mechanism. Residues 180 to 183 (RSCD), Asn191, and 221 to 223 (HIY) contribute to the dUMP site. A (6R)-5,10-methylene-5,6,7,8-tetrahydrofolate-binding site is contributed by Asp183. Ser282 provides a ligand contact to (6R)-5,10-methylene-5,6,7,8-tetrahydrofolate.

Belongs to the thymidylate synthase family. Bacterial-type ThyA subfamily. As to quaternary structure, homodimer.

It localises to the cytoplasm. The enzyme catalyses dUMP + (6R)-5,10-methylene-5,6,7,8-tetrahydrofolate = 7,8-dihydrofolate + dTMP. Its pathway is pyrimidine metabolism; dTTP biosynthesis. Functionally, catalyzes the reductive methylation of 2'-deoxyuridine-5'-monophosphate (dUMP) to 2'-deoxythymidine-5'-monophosphate (dTMP) while utilizing 5,10-methylenetetrahydrofolate (mTHF) as the methyl donor and reductant in the reaction, yielding dihydrofolate (DHF) as a by-product. This enzymatic reaction provides an intracellular de novo source of dTMP, an essential precursor for DNA biosynthesis. This Haemophilus influenzae (strain ATCC 51907 / DSM 11121 / KW20 / Rd) protein is Thymidylate synthase.